We begin with the raw amino-acid sequence, 346 residues long: Thiamine-phosphate synthase (346 aa).

The segment at 1–125 (MSVTPNPDQH…SKISAQIRYE (125 aa)) is unknown. A thiamine-phosphate synthase region spans residues 126–346 (IYDLEVIILK…SKELLGKLKK (221 aa)). Residues 177-181 (QYRCK) and Asn-209 each bind 4-amino-2-methyl-5-(diphosphooxymethyl)pyrimidine. 2 residues coordinate Mg(2+): Asp-210 and Asp-229. Ser-248 serves as a coordination point for 4-amino-2-methyl-5-(diphosphooxymethyl)pyrimidine. 274-276 (TKS) provides a ligand contact to 2-[(2R,5Z)-2-carboxy-4-methylthiazol-5(2H)-ylidene]ethyl phosphate. Lys-277 is a 4-amino-2-methyl-5-(diphosphooxymethyl)pyrimidine binding site. Gly-304 provides a ligand contact to 2-[(2R,5Z)-2-carboxy-4-methylthiazol-5(2H)-ylidene]ethyl phosphate.

The protein belongs to the thiamine-phosphate synthase family. Mg(2+) serves as cofactor.

It carries out the reaction 2-[(2R,5Z)-2-carboxy-4-methylthiazol-5(2H)-ylidene]ethyl phosphate + 4-amino-2-methyl-5-(diphosphooxymethyl)pyrimidine + 2 H(+) = thiamine phosphate + CO2 + diphosphate. The enzyme catalyses 2-(2-carboxy-4-methylthiazol-5-yl)ethyl phosphate + 4-amino-2-methyl-5-(diphosphooxymethyl)pyrimidine + 2 H(+) = thiamine phosphate + CO2 + diphosphate. The catalysed reaction is 4-methyl-5-(2-phosphooxyethyl)-thiazole + 4-amino-2-methyl-5-(diphosphooxymethyl)pyrimidine + H(+) = thiamine phosphate + diphosphate. Its pathway is cofactor biosynthesis; thiamine diphosphate biosynthesis; thiamine phosphate from 4-amino-2-methyl-5-diphosphomethylpyrimidine and 4-methyl-5-(2-phosphoethyl)-thiazole: step 1/1. In terms of biological role, condenses 4-methyl-5-(beta-hydroxyethyl)thiazole monophosphate (THZ-P) and 2-methyl-4-amino-5-hydroxymethyl pyrimidine pyrophosphate (HMP-PP) to form thiamine monophosphate (TMP). The sequence is that of Thiamine-phosphate synthase from Prochlorococcus marinus (strain SARG / CCMP1375 / SS120).